Consider the following 246-residue polypeptide: Acetoacetate decarboxylase (246 aa).

Lys-116 serves as the catalytic Schiff-base intermediate with acetoacetate.

This sequence belongs to the ADC family. Homododecamer.

The enzyme catalyses acetoacetate + H(+) = acetone + CO2. Its function is as follows. Catalyzes the conversion of acetoacetate to acetone and carbon dioxide. In Chromobacterium violaceum (strain ATCC 12472 / DSM 30191 / JCM 1249 / CCUG 213 / NBRC 12614 / NCIMB 9131 / NCTC 9757 / MK), this protein is Acetoacetate decarboxylase.